Here is a 155-residue protein sequence, read N- to C-terminus: Transcriptional repressor NrdR (155 aa).

Residues 1–10 (MQCPHCHHNS) are compositionally biased toward basic residues. Positions 1-21 (MQCPHCHHNSSRVVDSRPTDG) are disordered. A zinc finger spans residues 3–34 (CPHCHHNSSRVVDSRPTDGGRAIRRRRECENC). An ATP-cone domain is found at 49–139 (LLVIKKNGTR…VYRQFKDMSV (91 aa)).

This sequence belongs to the NrdR family. The cofactor is Zn(2+).

In terms of biological role, negatively regulates transcription of bacterial ribonucleotide reductase nrd genes and operons by binding to NrdR-boxes. The polypeptide is Transcriptional repressor NrdR (Lacticaseibacillus casei (strain BL23) (Lactobacillus casei)).